The chain runs to 58 residues: UPF0391 membrane protein Gbem_0127 (58 aa).

Helical transmembrane passes span 4–24 (WALI…GGIA) and 33–53 (ILFY…LLAG).

The protein belongs to the UPF0391 family.

Its subcellular location is the cell membrane. The protein is UPF0391 membrane protein Gbem_0127 of Citrifermentans bemidjiense (strain ATCC BAA-1014 / DSM 16622 / JCM 12645 / Bem) (Geobacter bemidjiensis).